The chain runs to 318 residues: DNA repair nuclease/redox regulator APEX1 (318 aa).

The segment at 1–33 (MPKRGKKGAVAEDGDELKTEPEAKKSKTAAKKN) is necessary for interaction with YBX1, binding to RNA, association together with NPM1 to rRNA, endoribonuclease activity on abasic RNA and localization in the nucleoli. The tract at residues 1–60 (MPKRGKKGAVAEDGDELKTEPEAKKSKTAAKKNDKEAAGEGPALYEDPPDQKTSPSGKPA) is disordered. N6-acetyllysine; by EP300 is present on residues Lys6 and Lys7. Positions 8-13 (GAVAED) match the Nuclear localization signal (NLS) motif. The span at 16–38 (ELKTEPEAKKSKTAAKKNDKEAA) shows a compositional bias: basic and acidic residues. The segment at 23–33 (AKKSKTAAKKN) is necessary for interaction with NPM1 and for efficient rRNA binding. 4 positions are modified to N6-acetyllysine: Lys27, Lys31, Lys32, and Lys35. The residue at position 54 (Ser54) is a Phosphoserine. A Nuclear export signal (NES) motif is present at residues 64–80 (ICSWNVDGLRAWIKKKG). Cys65 is modified (S-nitrosocysteine; alternate). The cysteines at positions 65 and 93 are disulfide-linked. Asp70 lines the Mg(2+) pocket. Cys93 is subject to S-nitrosocysteine; alternate. Mg(2+) is bound at residue Glu96. Tyr171 is an active-site residue. Lys197 is modified (N6-acetyllysine). Residues Asp210 and Asn212 each contribute to the Mg(2+) site. Asp210 (proton donor/acceptor) is an active-site residue. Thr233 is modified (phosphothreonine; by CDK5). A mitochondrial targeting sequence (MTS) region spans residues 289–318 (HSLLPALCDSKIRSKALGSDHCPITLYLAL). Asp308 serves as a coordination point for Mg(2+). Position 310 is an S-nitrosocysteine (Cys310).

This sequence belongs to the DNA repair enzymes AP/ExoA family. Monomer. Homodimer; disulfide-linked. Component of the SET complex, composed of at least APEX1, SET, ANP32A, HMGB2, NME1 and TREX1. Associates with the dimer XRCC5/XRCC6 in a DNA-dependent manner. Interacts with SIRT1; the interaction is increased in the context of genotoxic stress. Interacts with HDAC1, HDAC2 and HDAC3; the interactions are not dependent on the APEX1 acetylation status. Interacts with XRCC1; the interaction is induced by SIRT1 and increased with the APEX1 acetylated form. Interacts with NPM1 (via N-terminal domain); the interaction is RNA-dependent and decreases in hydrogen peroxide-damaged cells. Interacts (via N-terminus) with YBX1 (via C-terminus); the interaction is increased in presence of APEX1 acetylated at Lys-6 and Lys-7. Interacts with HNRNPL; the interaction is DNA-dependent. Interacts (via N-terminus) with KPNA1 and KPNA2. Interacts with TXN; the interaction stimulates the FOS/JUN AP-1 complex DNA-binding activity in a redox-dependent manner. Interacts with GZMA, KRT8, MDM2, POLB, PRDX6, PRPF19, RPLP0, TOMM20 and WDR77. Binds to CDK5. The cofactor is Mg(2+). Mn(2+) serves as cofactor. Phosphorylated. Phosphorylation by kinase PKC or casein kinase CK2 results in enhanced redox activity that stimulates binding of the FOS/JUN AP-1 complex to its cognate binding site. AP-endodeoxyribonuclease activity is not affected by CK2-mediated phosphorylation. Phosphorylation of Thr-233 by CDK5 in response to MPP(+)/MPTP (1-methyl-4-phenylpyridinium) reduces AP-endodeoxyribonuclease activity resulting in accumulation of DNA damage and contributing to neuronal death. Post-translationally, acetylated on Lys-6 and Lys-7. Acetylation is increased by the transcriptional coactivator EP300 acetyltransferase, genotoxic agents like H(2)O(2) and methyl methanesulfonate (MMS). Acetylation increases its binding affinity to the negative calcium response element (nCaRE) DNA promoter. The acetylated form induces a stronger binding of YBX1 to the Y-box sequence in the MDR1 promoter than the unacetylated form. Deacetylated on lysines. Lys-6 and Lys-7 are deacetylated by SIRT1. In terms of processing, cleaved at Lys-31 by granzyme A to create the mitochondrial form; leading in reduction of binding to DNA, AP endodeoxyribonuclease activity, redox activation of transcription factors and to enhanced cell death. Cleaved by granzyme K; leading to intracellular ROS accumulation and enhanced cell death after oxidative stress. Cys-69 and Cys-93 are nitrosylated in response to nitric oxide (NO) and lead to the exposure of the nuclear export signal (NES). Post-translationally, ubiquitinated by MDM2; leading to translocation to the cytoplasm and proteasomal degradation.

It is found in the nucleus. The protein localises to the nucleolus. The protein resides in the nucleus speckle. Its subcellular location is the endoplasmic reticulum. It localises to the cytoplasm. It is found in the mitochondrion. It carries out the reaction Exonucleolytic cleavage in the 3'- to 5'-direction to yield nucleoside 5'-phosphates.. NPM1 stimulates endodeoxyribonuclease activity on double-stranded DNA with AP sites, but inhibits endoribonuclease activity on single-stranded RNA containing AP sites. Its function is as follows. Multifunctional protein that plays a central role in the cellular response to oxidative stress. The two major activities of APEX1 are DNA repair and redox regulation of transcriptional factors. Functions as an apurinic/apyrimidinic (AP) endodeoxyribonuclease in the DNA base excision repair (BER) pathway of DNA lesions induced by oxidative and alkylating agents. Initiates repair of AP sites in DNA by catalyzing hydrolytic incision of the phosphodiester backbone immediately adjacent to the damage, generating a single-strand break with 5'-deoxyribose phosphate and 3'-hydroxyl ends. Also incises at AP sites in the DNA strand of DNA/RNA hybrids, single-stranded DNA regions of R-loop structures, and single-stranded RNA molecules. Has 3'-5' exoribonuclease activity on mismatched deoxyribonucleotides at the 3' termini of nicked or gapped DNA molecules during short-patch BER. Possesses DNA 3' phosphodiesterase activity capable of removing lesions (such as phosphoglycolate) blocking the 3' side of DNA strand breaks. May also play a role in the epigenetic regulation of gene expression by participating in DNA demethylation. Acts as a loading factor for POLB onto non-incised AP sites in DNA and stimulates the 5'-terminal deoxyribose 5'-phosphate (dRp) excision activity of POLB. Plays a role in the protection from granzyme-mediated cellular repair leading to cell death. Also involved in the DNA cleavage step of class switch recombination (CSR). On the other hand, APEX1 also exerts reversible nuclear redox activity to regulate DNA binding affinity and transcriptional activity of transcriptional factors by controlling the redox status of their DNA-binding domain, such as the FOS/JUN AP-1 complex after exposure to IR. Involved in calcium-dependent down-regulation of parathyroid hormone (PTH) expression by binding to negative calcium response elements (nCaREs). Together with HNRNPL or the dimer XRCC5/XRCC6, associates with nCaRE, acting as an activator of transcriptional repression. Stimulates the YBX1-mediated MDR1 promoter activity, when acetylated at Lys-6 and Lys-7, leading to drug resistance. Also acts as an endoribonuclease involved in the control of single-stranded RNA metabolism. Plays a role in regulating MYC mRNA turnover by preferentially cleaving in between UA and CA dinucleotides of the MYC coding region determinant (CRD). In association with NMD1, plays a role in the rRNA quality control process during cell cycle progression. Associates, together with YBX1, on the MDR1 promoter. Together with NPM1, associates with rRNA. Binds DNA and RNA. The polypeptide is DNA repair nuclease/redox regulator APEX1 (APEX1) (Gorilla gorilla gorilla (Western lowland gorilla)).